Reading from the N-terminus, the 353-residue chain is Guanine nucleotide-binding protein G(q) subunit alpha (353 aa).

2 S-palmitoyl cysteine lipidation sites follow: cysteine 3 and cysteine 4. Residues 32-353 (RELKLLLLGT…QLNLKEYNLV (322 aa)) enclose the G-alpha domain. Positions 35–48 (KLLLLGTGESGKST) are G1 motif. GTP-binding positions include 40–47 (GTGESGKS), 174–180 (LRVRVPT), 199–203 (DVGGQ), 268–271 (NKKD), and alanine 325. Positions 47 and 180 each coordinate Mg(2+). The G2 motif stretch occupies residues 172 to 180 (DILRVRVPT). Residues 195–204 (FRMVDVGGQR) are G3 motif. Positions 264-271 (ILFLNKKD) are G4 motif. Positions 323–328 (TCATDT) are G5 motif.

The protein belongs to the G-alpha family. G(q) subfamily. G proteins are composed of 3 units; alpha, beta and gamma. The alpha chain contains the guanine nucleotide binding site.

Functionally, guanine nucleotide-binding proteins (G proteins) are involved as modulators or transducers in various transmembrane signaling systems. The chain is Guanine nucleotide-binding protein G(q) subunit alpha (SCGQA) from Mizuhopecten yessoensis (Japanese scallop).